The chain runs to 816 residues: Phosphatidylinositol 4-kinase beta (816 aa).

Disordered regions lie at residues 1–28, 93–120, and 249–318; these read MGDT…NGGS, PPTG…RRRR, and HRKR…SFSS. Residue Gly2 is modified to N-acetylglycine. The tract at residues 2–68 is interaction with ACBD3; sequence GDTVVAPAPL…VKLSHGGVAS (67 aa). Residues 49–242 form the PIK helical domain; that stretch reads QKACQEVLQK…GTKLRRLILS (194 aa). At Ser258 the chain carries Phosphoserine. Thr263 bears the Phosphothreonine mark. Residues Ser266, Ser275, Ser277, Ser284, Ser294, Ser428, and Ser511 each carry the phosphoserine modification. The span at 278-294 shows a compositional bias: low complexity; that stretch reads DATASISLSSSLKRTAS. 2 positions are modified to phosphothreonine: Thr517 and Thr519. One can recognise a PI3K/PI4K catalytic domain in the interval 535–801; the sequence is EPWQEKVRRI…MVDGSMRSIT (267 aa). A G-loop region spans residues 541–547; sequence VRRIREG. The interval 668-676 is catalytic loop; it reads QVKDRHNGN. Residues 687–711 are activation loop; that stretch reads HIDFGFILSSSPRNLGFETSAFKLT.

It belongs to the PI3/PI4-kinase family. Type III PI4K subfamily. As to quaternary structure, interacts with ARF1 and ARF3 in the Golgi complex, but not with ARF4, ARF5 or ARF6. Interacts with NCS1/FREQ in a calcium-independent manner. Interacts with CALN1/CABP8 and CALN2/CABP7; in a calcium-dependent manner; this interaction competes with NCS1/FREQ binding. Interacts with ACBD3. Interacts with ARMH3, YWHAB, YWHAE, YWHAG, YWHAH, YWHAQ, YWHAZ and SFN. Interacts with GGA2 (via VHS domain); the interaction is important for PI4KB location at the Golgi apparatus membrane. Interacts with ATG9A. It depends on Mg(2+) as a cofactor. Requires Mn(2+) as cofactor.

The protein localises to the endomembrane system. Its subcellular location is the mitochondrion outer membrane. The protein resides in the rough endoplasmic reticulum membrane. It is found in the golgi apparatus. It localises to the golgi apparatus membrane. The catalysed reaction is a 1,2-diacyl-sn-glycero-3-phospho-(1D-myo-inositol) + ATP = a 1,2-diacyl-sn-glycero-3-phospho-(1D-myo-inositol 4-phosphate) + ADP + H(+). Inhibited by wortmannin. Increased kinase activity upon interaction with NCS1/FREQ. In terms of biological role, phosphorylates phosphatidylinositol (PI) in the first committed step in the production of the second messenger inositol-1,4,5,-trisphosphate (PIP). May regulate Golgi disintegration/reorganization during mitosis, possibly via its phosphorylation. Involved in Golgi-to-plasma membrane trafficking. May play an important role in the inner ear development. This Rhinolophus ferrumequinum (Greater horseshoe bat) protein is Phosphatidylinositol 4-kinase beta (PI4KB).